Reading from the N-terminus, the 31-residue chain is Cytochrome b6-f complex subunit 6 (31 aa).

Residues Val-4–Gly-24 form a helical membrane-spanning segment.

This sequence belongs to the PetL family. In terms of assembly, the 4 large subunits of the cytochrome b6-f complex are cytochrome b6, subunit IV (17 kDa polypeptide, PetD), cytochrome f and the Rieske protein, while the 4 small subunits are PetG, PetL, PetM and PetN. The complex functions as a dimer.

It localises to the plastid. Its subcellular location is the chloroplast thylakoid membrane. In terms of biological role, component of the cytochrome b6-f complex, which mediates electron transfer between photosystem II (PSII) and photosystem I (PSI), cyclic electron flow around PSI, and state transitions. PetL is important for photoautotrophic growth as well as for electron transfer efficiency and stability of the cytochrome b6-f complex. The protein is Cytochrome b6-f complex subunit 6 of Nephroselmis olivacea (Green alga).